Consider the following 205-residue polypeptide: Thymidylate kinase (205 aa).

11–18 contacts ATP; it reads GVEGSGKS.

This sequence belongs to the thymidylate kinase family.

It catalyses the reaction dTMP + ATP = dTDP + ADP. In terms of biological role, phosphorylation of dTMP to form dTDP in both de novo and salvage pathways of dTTP synthesis. The chain is Thymidylate kinase from Ruthia magnifica subsp. Calyptogena magnifica.